A 234-amino-acid polypeptide reads, in one-letter code: Orotate phosphoribosyltransferase (234 aa).

Lys30 lines the 5-phospho-alpha-D-ribose 1-diphosphate pocket. An orotate-binding site is contributed by 38-39 (FF). Residues 80 to 81 (YK), Arg110, Lys111, Lys114, His116, and 136 to 144 (DDVITAGTA) each bind 5-phospho-alpha-D-ribose 1-diphosphate. Residues Thr140 and Arg168 each coordinate orotate.

The protein belongs to the purine/pyrimidine phosphoribosyltransferase family. PyrE subfamily. In terms of assembly, homodimer.

It carries out the reaction orotidine 5'-phosphate + diphosphate = orotate + 5-phospho-alpha-D-ribose 1-diphosphate. The protein operates within pyrimidine metabolism; UMP biosynthesis via de novo pathway; UMP from orotate: step 1/2. In terms of biological role, catalyzes the transfer of a ribosyl phosphate group from 5-phosphoribose 1-diphosphate to orotate, leading to the formation of orotidine monophosphate (OMP). This chain is Orotate phosphoribosyltransferase (URA5), found in Metarhizium anisopliae (Entomophthora anisopliae).